A 331-amino-acid polypeptide reads, in one-letter code: Protein-methionine-sulfoxide reductase catalytic subunit MsrP (331 aa).

Positions 1 to 57 (MLIKKTLRAALAGDDIPRSEITPRAVFEHRRRILQAAGAAAAGGLVGAHGLALAAYA) form a signal peptide, tat-type signal. Mo-molybdopterin-binding positions include N90, 93–94 (YE), C148, T183, N231, R236, and 247–249 (SAK).

The protein belongs to the MsrP family. Heterodimer of a catalytic subunit (MsrP) and a heme-binding subunit (MsrQ). Requires Mo-molybdopterin as cofactor. Post-translationally, predicted to be exported by the Tat system. The position of the signal peptide cleavage has not been experimentally proven.

It localises to the periplasm. The catalysed reaction is L-methionyl-[protein] + a quinone + H2O = L-methionyl-(S)-S-oxide-[protein] + a quinol. It carries out the reaction L-methionyl-[protein] + a quinone + H2O = L-methionyl-(R)-S-oxide-[protein] + a quinol. Part of the MsrPQ system that repairs oxidized periplasmic proteins containing methionine sulfoxide residues (Met-O), using respiratory chain electrons. Thus protects these proteins from oxidative-stress damage caused by reactive species of oxygen and chlorine generated by the host defense mechanisms. MsrPQ is essential for the maintenance of envelope integrity under bleach stress, rescuing a wide series of structurally unrelated periplasmic proteins from methionine oxidation. The catalytic subunit MsrP is non-stereospecific, being able to reduce both (R-) and (S-) diastereoisomers of methionine sulfoxide. The protein is Protein-methionine-sulfoxide reductase catalytic subunit MsrP of Burkholderia mallei (strain ATCC 23344).